We begin with the raw amino-acid sequence, 420 residues long: MAKSRLFCLLVALGSVFMILFIIVYWDNVGTANLNLHTSFSKSLPFQSSEELSTAVTATRNRFVSDVDVFLNSFLNLSTRRSELQSTKAEKMPLRGSSSLEENARGYDWSTKEKLEDAILDQEMIQQERKLNLLQFCGNSSFGFPTKERSFDDIPNRELDHLIVDDRHGIIYCYVPKVACTNWKRVMIVLSESLLDKKGVPYQDPLLIPREDVHNTSSHLTFNKFWRRYGKFSRHMMKIKLKKYTKFLFVRDPFVRLISAFRSKFELENEDFYRSFAVPILTRFSNTTRVPDTVGEAFSSGTMPSFSQFIQYLLDPQTEEQKPFNEHWRQVYRLCHPCQIEYDFIGKLETLGEDTALLLRQLNLDTLFQFPPSYRNRTASSWEEDWYSKLPIAWRKKLYKLFEADFVLFGYPKPDDLLSV.

At 1–5 (MAKSR) the chain is on the cytoplasmic side. The helical; Signal-anchor for type II membrane protein transmembrane segment at 6–26 (LFCLLVALGSVFMILFIIVYW) threads the bilayer. Topologically, residues 27–420 (DNVGTANLNL…YPKPDDLLSV (394 aa)) are lumenal. N-linked (GlcNAc...) asparagine glycans are attached at residues asparagine 76 and asparagine 139. A 3'-phosphoadenylyl sulfate-binding site is contributed by 176–182 (PKVACTN). The N-linked (GlcNAc...) asparagine glycan is linked to asparagine 215. Position 251–259 (251–259 (RDPFVRLIS)) interacts with 3'-phosphoadenylyl sulfate. N-linked (GlcNAc...) asparagine glycosylation is found at asparagine 286 and asparagine 376.

The protein belongs to the sulfotransferase 2 family.

It localises to the golgi apparatus membrane. The enzyme catalyses chondroitin beta-D-glucuronate + n 3'-phosphoadenylyl sulfate = chondroitin 4'-sulfate + n adenosine 3',5'-bisphosphate + n H(+). Catalyzes the transfer of sulfate to position 4 of the N-acetylgalactosamine (GalNAc) residue of chondroitin and desulfated dermatan sulfate. Chondroitin sulfate constitutes the predominant proteoglycan present in cartilage and is distributed on the surfaces of many cells and extracellular matrices. The sequence is that of Carbohydrate sulfotransferase 12 (chst12) from Xenopus laevis (African clawed frog).